A 288-amino-acid polypeptide reads, in one-letter code: Acetyl-coenzyme A carboxylase carboxyl transferase subunit beta (288 aa).

The CoA carboxyltransferase N-terminal domain occupies 24–288 (LWVKCPESGE…TRTPRASEAA (265 aa)).

Belongs to the AccD/PCCB family. As to quaternary structure, acetyl-CoA carboxylase is a heterohexamer composed of biotin carboxyl carrier protein (AccB), biotin carboxylase (AccC) and two subunits each of ACCase subunit alpha (AccA) and ACCase subunit beta (AccD).

The protein localises to the cytoplasm. It catalyses the reaction N(6)-carboxybiotinyl-L-lysyl-[protein] + acetyl-CoA = N(6)-biotinyl-L-lysyl-[protein] + malonyl-CoA. It functions in the pathway lipid metabolism; malonyl-CoA biosynthesis; malonyl-CoA from acetyl-CoA: step 1/1. Component of the acetyl coenzyme A carboxylase (ACC) complex. Biotin carboxylase (BC) catalyzes the carboxylation of biotin on its carrier protein (BCCP) and then the CO(2) group is transferred by the transcarboxylase to acetyl-CoA to form malonyl-CoA. The protein is Acetyl-coenzyme A carboxylase carboxyl transferase subunit beta of Methylocella silvestris (strain DSM 15510 / CIP 108128 / LMG 27833 / NCIMB 13906 / BL2).